The sequence spans 610 residues: Elongation factor 4 (610 aa).

The tr-type G domain maps to 11 to 193 (EKIRNFSIIA…QIVEKVPAPT (183 aa)). GTP-binding positions include 23-28 (DHGKST) and 140-143 (NKID).

This sequence belongs to the TRAFAC class translation factor GTPase superfamily. Classic translation factor GTPase family. LepA subfamily.

The protein localises to the cell membrane. The catalysed reaction is GTP + H2O = GDP + phosphate + H(+). In terms of biological role, required for accurate and efficient protein synthesis under certain stress conditions. May act as a fidelity factor of the translation reaction, by catalyzing a one-codon backward translocation of tRNAs on improperly translocated ribosomes. Back-translocation proceeds from a post-translocation (POST) complex to a pre-translocation (PRE) complex, thus giving elongation factor G a second chance to translocate the tRNAs correctly. Binds to ribosomes in a GTP-dependent manner. The polypeptide is Elongation factor 4 (Streptococcus suis (strain 98HAH33)).